A 33-amino-acid chain; its full sequence is Trypsin inhibitor 1 (33 aa).

Cystine bridges form between cysteine 1–cysteine 17, cysteine 8–cysteine 21, and cysteine 16–cysteine 32.

As to expression, expressed in leaves and fruit flesh (at protein level).

Inhibits trypsin (IC(50)=471 nM). This is Trypsin inhibitor 1 from Beta vulgaris subsp. vulgaris (Beet).